The following is a 440-amino-acid chain: Xylose isomerase (440 aa).

Catalysis depends on residues His101 and Asp104. Positions 232, 268, 271, 296, 307, 309, and 339 each coordinate Mg(2+).

Belongs to the xylose isomerase family. In terms of assembly, homotetramer. It depends on Mg(2+) as a cofactor.

It localises to the cytoplasm. The catalysed reaction is alpha-D-xylose = alpha-D-xylulofuranose. The polypeptide is Xylose isomerase (Escherichia coli (strain SMS-3-5 / SECEC)).